The sequence spans 229 residues: Uridylate cyclase (229 aa).

Positions 47 to 178 (TVLYADLDGS…RAANYAAKLT (132 aa)) constitute a Guanylate cyclase domain. Tyr-50 is a binding site for a ribonucleoside 5'-triphosphate. Asp-52 and Asp-96 together coordinate Mn(2+). An a ribonucleoside 5'-triphosphate-binding site is contributed by Arg-97.

This sequence belongs to the adenylyl cyclase class-4/guanylyl cyclase family. Pyrimidine cyclase subfamily. Homodimer. It depends on Mn(2+) as a cofactor.

The protein resides in the cytoplasm. It catalyses the reaction UTP = 3',5'-cyclic UMP + diphosphate. In terms of biological role, pycsar (pyrimidine cyclase system for antiphage resistance) provides immunity against bacteriophage. The pyrimidine cyclase (PycC) synthesizes cyclic nucleotides in response to infection; these serve as specific second messenger signals. The signals activate the adjacent effector, leading to bacterial cell death and abortive phage infection. A clade B Pycsar system. The pyrimidine cyclase gene of a two-gene Pycsar system, generates cyclic UMP (cUMP) from UTP, has little to no activity on ATP, CTP or GTP. Expression of this and adjacent effector BcPycTIR (AC A0A0J5WTU0) probably confers resistance to bacteriophage. The genes are probably only expressed in response to bacteriophage infection. The chain is Uridylate cyclase from Burkholderia cepacia (Pseudomonas cepacia).